A 485-amino-acid chain; its full sequence is Peroxisomal catalase (485 aa).

Catalysis depends on residues His53 and Asn126. Tyr336 is a binding site for heme.

Belongs to the catalase family. Homotetramer. The cofactor is heme.

The protein resides in the peroxisome matrix. It catalyses the reaction 2 H2O2 = O2 + 2 H2O. Its function is as follows. Catalyzes the degradation of hydrogen peroxide (H(2)O(2)) generated by peroxisomal oxidases to water and oxygen, thereby protecting cells from the toxic effects of hydrogen peroxide. The polypeptide is Peroxisomal catalase (POX9) (Candida tropicalis (Yeast)).